The chain runs to 926 residues: Ubiquitin carboxyl-terminal hydrolase 4 (926 aa).

The Rhodanese domain occupies 205-328 (SQMEILLIDI…WLKSNYGSQV (124 aa)). At S443 the chain carries Phosphoserine. Positions 562-923 (VGLENLGNSC…NAYVLFYHRV (362 aa)) constitute a USP domain. C571 serves as the catalytic Nucleophile. H880 acts as the Proton acceptor in catalysis.

The protein belongs to the peptidase C19 family. Interacts with BRO1, RFU1 and VPS32. Associates with the 26S proteasome.

Its subcellular location is the cytoplasm. The protein resides in the late endosome membrane. The catalysed reaction is Thiol-dependent hydrolysis of ester, thioester, amide, peptide and isopeptide bonds formed by the C-terminal Gly of ubiquitin (a 76-residue protein attached to proteins as an intracellular targeting signal).. Its activity is regulated as follows. RFU1 is an inhibitor of deubiquitination activity. Its function is as follows. Ubiquitin thioesterase that acts at the late endosome/prevacuolar compartment to recover ubiquitin from ubiquitinated membrane proteins en route to the vacuole. Also removes ubiquitin from soluble proteins targeted to proteasomes. Is essential to maintain a normal level of free ubiquitin. Involved in the ammonium-induced down-regulation of the GAP1 permease and the UME3 destruction in response to oxidative stress. Has a role in the RAD9 checkpoint response to TOP1 poisons. Required for promoting coordination of DNA replication and avoids DNA overreplication. This chain is Ubiquitin carboxyl-terminal hydrolase 4 (DOA4), found in Saccharomyces cerevisiae (strain YJM789) (Baker's yeast).